Reading from the N-terminus, the 141-residue chain is Histone H2B (141 aa).

Over residues 1 to 10 (MAPKAAEKKP) the composition is skewed to basic and acidic residues. The segment at 1–49 (MAPKAAEKKPSTGGKAPAGGKAPAEKKEAGKKTAAAASGDKKKRGKTRK) is disordered. An N6-acetyllysine; alternate mark is found at lysine 8 and lysine 9. Residues lysine 8 and lysine 9 each participate in a glycyl lysine isopeptide (Lys-Gly) (interchain with G-Cter in SUMO); alternate cross-link. Positions 11–22 (STGGKAPAGGKA) are enriched in low complexity. Lysine 15 bears the N6-acetyllysine mark. N6-acetyllysine; alternate is present on lysine 26. A Glycyl lysine isopeptide (Lys-Gly) (interchain with G-Cter in SUMO); alternate cross-link involves residue lysine 26. Lysine 27 is covalently cross-linked (Glycyl lysine isopeptide (Lys-Gly) (interchain with G-Cter in SUMO)). Lysine 135 participates in a covalent cross-link: Glycyl lysine isopeptide (Lys-Gly) (interchain with G-Cter in ubiquitin).

The protein belongs to the histone H2B family. In terms of assembly, the nucleosome is a histone octamer containing two molecules each of H2A, H2B, H3 and H4 assembled in one H3-H4 heterotetramer and two H2A-H2B heterodimers. The octamer wraps approximately 147 bp of DNA. In terms of processing, monoubiquitinated by the ubc2-bre1 complex to form H2BK123ub1. H2BK123ub1 gives a specific tag for epigenetic transcriptional activation and is also prerequisite for H3K4me and H3K79me formation. H2BK123ub1 also modulates the formation of double-strand breaks during meiosis and is a prerequisite for DNA-damage checkpoint activation. Acetylated by gcn5 to form H2BK11ac and H2BK16ac. H2BK16ac can also be formed by esa1. Acetylation of N-terminal lysines and particularly formation of H2BK11acK16ac has a positive effect on transcription. Post-translationally, sumoylation to form H2BK6su or H2BK7su, and probably also H2BK16su or H2BK17su, occurs preferentially near the telomeres and represses gene transcription.

It is found in the nucleus. It localises to the chromosome. Core component of nucleosome. Nucleosomes wrap and compact DNA into chromatin, limiting DNA accessibility to the cellular machineries which require DNA as a template. Histones thereby play a central role in transcription regulation, DNA repair, DNA replication and chromosomal stability. DNA accessibility is regulated via a complex set of post-translational modifications of histones, also called histone code, and nucleosome remodeling. The sequence is that of Histone H2B (htb1) from Aspergillus oryzae (strain ATCC 42149 / RIB 40) (Yellow koji mold).